Reading from the N-terminus, the 367-residue chain is Centromere protein L (367 aa).

This sequence belongs to the CENP-L/IML3 family.

Its subcellular location is the nucleus. It is found in the chromosome. The protein localises to the centromere. In terms of biological role, probable component of a centromeric complex involved in assembly of kinetochore proteins, mitotic progression and chromosome segregation. This chain is Centromere protein L (cenpl), found in Danio rerio (Zebrafish).